Here is a 702-residue protein sequence, read N- to C-terminus: Vertnin (702 aa).

The segment at 562–625 is disordered; that stretch reads VPTLGKGGQE…QGQPHSGPLL (64 aa). Basic and acidic residues predominate over residues 570 to 582; it reads QEAEEKQEKEAGR.

The protein belongs to the vertnin family.

The protein localises to the nucleus. In terms of biological role, acts as a transcription factor that regulates development of thoracic vertebrae. This Homo sapiens (Human) protein is Vertnin.